The chain runs to 447 residues: GTPase Der (447 aa).

2 EngA-type G domains span residues 4–165 (KIIA…PEEE) and 180–357 (LQIV…KIWN). GTP is bound by residues 10–17 (GRPNVGKS), 57–61 (DTPGL), 119–122 (NKCE), 186–193 (GRPNAGKS), 233–237 (DTAGL), and 298–301 (NKWD). The region spanning 358–443 (KKIATSKLNE…PIRFTYVKTK (86 aa)) is the KH-like domain.

The protein belongs to the TRAFAC class TrmE-Era-EngA-EngB-Septin-like GTPase superfamily. EngA (Der) GTPase family. Associates with the 50S ribosomal subunit.

GTPase that plays an essential role in the late steps of ribosome biogenesis. The chain is GTPase Der from Rickettsia akari (strain Hartford).